Here is an 879-residue protein sequence, read N- to C-terminus: Paramyosin, long form (879 aa).

The segment at 1 to 31 (MSSSQAVRSSKYSYRATSTGPGTADVNIEYI) is nonhelical region. The residue at position 18 (serine 18) is a Phosphoserine. A coiled-coil region spans residues 32–858 (QDLSSLSRLE…IIRAKHRTFV (827 aa)). A nonhelical region region spans residues 859 to 879 (TTSTVPGSQVYIQETTRTITE).

Belongs to the paramyosin family. Heterodimer of two isoforms. Post-translationally, the more-acidic and less-abundant isoform is phosphorylated. As to expression, expressed in all larval and adult muscle tissues. Expression is five times higher in tubular than in fibrillar muscles.

The protein localises to the cytoplasm. It is found in the myofibril. Paramyosin is a major structural component of many thick filaments isolated from invertebrate muscles. This Drosophila melanogaster (Fruit fly) protein is Paramyosin, long form (Prm).